The primary structure comprises 861 residues: Leucine--tRNA ligase (861 aa).

The 'HIGH' region signature appears at 42-52 (PYPSGRLHMGH). Residues 619–623 (KMSKS) carry the 'KMSKS' region motif. Lys-622 serves as a coordination point for ATP.

The protein belongs to the class-I aminoacyl-tRNA synthetase family.

It is found in the cytoplasm. The enzyme catalyses tRNA(Leu) + L-leucine + ATP = L-leucyl-tRNA(Leu) + AMP + diphosphate. This is Leucine--tRNA ligase from Haemophilus influenzae (strain PittEE).